The following is a 562-amino-acid chain: Formate--tetrahydrofolate ligase (562 aa).

71-78 (TPAGEGKS) provides a ligand contact to ATP.

This sequence belongs to the formate--tetrahydrofolate ligase family.

The enzyme catalyses (6S)-5,6,7,8-tetrahydrofolate + formate + ATP = (6R)-10-formyltetrahydrofolate + ADP + phosphate. Its pathway is one-carbon metabolism; tetrahydrofolate interconversion. The sequence is that of Formate--tetrahydrofolate ligase from Bacillus cereus (strain ATCC 10987 / NRS 248).